The primary structure comprises 119 residues: Large ribosomal subunit protein bL20 (119 aa).

It belongs to the bacterial ribosomal protein bL20 family.

In terms of biological role, binds directly to 23S ribosomal RNA and is necessary for the in vitro assembly process of the 50S ribosomal subunit. It is not involved in the protein synthesizing functions of that subunit. The polypeptide is Large ribosomal subunit protein bL20 (Saccharophagus degradans (strain 2-40 / ATCC 43961 / DSM 17024)).